Consider the following 365-residue polypeptide: Aspartate-semialdehyde dehydrogenase (365 aa).

NADP(+) contacts are provided by Thr12, Gly13, Ser14, Val15, Ser37, Ser40, Leu85, and Asp86. The Acyl-thioester intermediate role is filled by Cys156. Residue Gly188 coordinates NADP(+). His256 functions as the Proton acceptor in the catalytic mechanism. Asn343 is an NADP(+) binding site.

Belongs to the aspartate-semialdehyde dehydrogenase family. Homotetramer; dimer of dimers.

Its subcellular location is the cytoplasm. The protein resides in the cytosol. It is found in the nucleus. It carries out the reaction L-aspartate 4-semialdehyde + phosphate + NADP(+) = 4-phospho-L-aspartate + NADPH + H(+). The protein operates within amino-acid biosynthesis; L-methionine biosynthesis via de novo pathway; L-homoserine from L-aspartate: step 2/3. It functions in the pathway amino-acid biosynthesis; L-threonine biosynthesis; L-threonine from L-aspartate: step 2/5. With respect to regulation, inhibited by the non-competitive inhibitors phthalaldehyde and naphthalene, the competitive inhibitor 1,4-benzoquinone and derivates such as 2-chloro-3-methoxy-1,4-naphthoquinone, 2,3-dichloro-1,4-naphthoquinone, 2-chloro-1,4-naphthoquinone, 2-bromo-1,4-naphthoquinone and 2,3-dichloro-5,8-dihydroxy-1,4-naphthoquinone, and 5-aminoisoquinoline. Inhibited by vinyl sulfones. Functionally, catalyzes the NADPH-dependent formation of L-aspartate 4-semialdehyde (L-ASA) by the reductive dephosphorylation of 4-phospho-L-aspartate. Mediates the second step in the biosynthesis of amino acids that derive from aspartate (the aspartate family of amino acids), including methioinine and threonine, the latter of which is a precursor to isoleucine. The chain is Aspartate-semialdehyde dehydrogenase from Candida albicans (strain SC5314 / ATCC MYA-2876) (Yeast).